Here is a 216-residue protein sequence, read N- to C-terminus: Putative cat eye syndrome critical region protein 9 (216 aa).

The first 23 residues, 1-23 (MQSHLAPLACAAAAGRAGGSCQA), serve as a signal peptide directing secretion. The N-linked (GlcNAc...) asparagine glycan is linked to asparagine 148.

As to expression, ubiquitously expressed with higher expression in heart.

Its subcellular location is the secreted. The polypeptide is Putative cat eye syndrome critical region protein 9 (CECR9) (Homo sapiens (Human)).